Here is a 459-residue protein sequence, read N- to C-terminus: Exodeoxyribonuclease 7 large subunit (459 aa).

It belongs to the XseA family. In terms of assembly, heterooligomer composed of large and small subunits.

Its subcellular location is the cytoplasm. The enzyme catalyses Exonucleolytic cleavage in either 5'- to 3'- or 3'- to 5'-direction to yield nucleoside 5'-phosphates.. Functionally, bidirectionally degrades single-stranded DNA into large acid-insoluble oligonucleotides, which are then degraded further into small acid-soluble oligonucleotides. This is Exodeoxyribonuclease 7 large subunit from Pseudomonas fluorescens (strain SBW25).